The sequence spans 204 residues: Large ribosomal subunit protein eL15 (204 aa).

Positions 161-180 (MRGLTSAGKKSRGLGKGHKF) are disordered. Residues 169 to 180 (KKSRGLGKGHKF) show a composition bias toward basic residues.

The protein belongs to the eukaryotic ribosomal protein eL15 family. Component of the large ribosomal subunit.

The protein localises to the cytoplasm. Component of the large ribosomal subunit. The ribosome is a large ribonucleoprotein complex responsible for the synthesis of proteins in the cell. This chain is Large ribosomal subunit protein eL15 (rpl15), found in Ictalurus punctatus (Channel catfish).